The chain runs to 378 residues: Alanine racemase (378 aa).

The Proton acceptor; specific for D-alanine role is filled by Lys40. Lys40 carries the post-translational modification N6-(pyridoxal phosphate)lysine. Substrate is bound at residue Arg140. The Proton acceptor; specific for L-alanine role is filled by Tyr270. Met317 provides a ligand contact to substrate.

This sequence belongs to the alanine racemase family. Pyridoxal 5'-phosphate is required as a cofactor.

The catalysed reaction is L-alanine = D-alanine. The protein operates within amino-acid biosynthesis; D-alanine biosynthesis; D-alanine from L-alanine: step 1/1. In terms of biological role, catalyzes the interconversion of L-alanine and D-alanine. May also act on other amino acids. The polypeptide is Alanine racemase (alr) (Lacticaseibacillus casei (strain BL23) (Lactobacillus casei)).